The following is a 564-amino-acid chain: Proline--tRNA ligase (564 aa).

Belongs to the class-II aminoacyl-tRNA synthetase family. ProS type 1 subfamily. In terms of assembly, homodimer.

Its subcellular location is the cytoplasm. It carries out the reaction tRNA(Pro) + L-proline + ATP = L-prolyl-tRNA(Pro) + AMP + diphosphate. In terms of biological role, catalyzes the attachment of proline to tRNA(Pro) in a two-step reaction: proline is first activated by ATP to form Pro-AMP and then transferred to the acceptor end of tRNA(Pro). As ProRS can inadvertently accommodate and process non-cognate amino acids such as alanine and cysteine, to avoid such errors it has two additional distinct editing activities against alanine. One activity is designated as 'pretransfer' editing and involves the tRNA(Pro)-independent hydrolysis of activated Ala-AMP. The other activity is designated 'posttransfer' editing and involves deacylation of mischarged Ala-tRNA(Pro). The misacylated Cys-tRNA(Pro) is not edited by ProRS. This chain is Proline--tRNA ligase, found in Sulfurihydrogenibium sp. (strain YO3AOP1).